Reading from the N-terminus, the 266-residue chain is Glutaconate CoA-transferase subunit B (266 aa).

The active site involves E54.

The protein belongs to the 3-oxoacid CoA-transferase subunit B family. As to quaternary structure, heterooctamer of four A and four B subunits.

It localises to the cytoplasm. It catalyses the reaction trans-glutaconate + acetyl-CoA = (2E)-glutaconyl-CoA + acetate. The protein operates within amino-acid degradation; L-glutamate degradation via hydroxyglutarate pathway; crotonoyl-CoA from L-glutamate: step 3/5. In terms of biological role, catalyzes the transfer of the CoA moiety from acetyl-CoA to (R)-2-hydroxyglutarate and related compounds like glutaconate. This chain is Glutaconate CoA-transferase subunit B (gctB), found in Acidaminococcus fermentans (strain ATCC 25085 / DSM 20731 / CCUG 9996 / CIP 106432 / VR4).